The chain runs to 241 residues: MTRDEARAKVIFALDVHEFSDVEQWADMLAPHVGMFKVGKQLFTSCGPAAVRMIQKCGGEVFLDLKYHDIPNTVAMASLEAARMGVKLFNLHALGGYEMMAKTVETLDKEFKGGERGKVLAVTILTSSNEQTLQDVGINIPVPEMVVKLALLARKAGIDGVVASPQEVPLIRKACGKDFLIVTPGVRPAFASSDDQKRIMTPAEAVRTGADYLVIGRPIAAAPKPVEAAEAIIDEIMAVEG.

Residues D15, K37, 64–73 (DLKYHDIPNT), T126, R187, Q196, G216, and R217 each bind substrate. K66 (proton donor) is an active-site residue.

This sequence belongs to the OMP decarboxylase family. Type 1 subfamily. Homodimer.

It catalyses the reaction orotidine 5'-phosphate + H(+) = UMP + CO2. It functions in the pathway pyrimidine metabolism; UMP biosynthesis via de novo pathway; UMP from orotate: step 2/2. In terms of biological role, catalyzes the decarboxylation of orotidine 5'-monophosphate (OMP) to uridine 5'-monophosphate (UMP). The protein is Orotidine 5'-phosphate decarboxylase of Geotalea uraniireducens (strain Rf4) (Geobacter uraniireducens).